A 384-amino-acid polypeptide reads, in one-letter code: Zinc finger protein GLIS2 homolog (384 aa).

The segment at Phe-128–His-153 adopts a C2H2-type 1 zinc-finger fold. Residues Tyr-163–His-190 form a C2H2-type 2; degenerate zinc finger. 3 C2H2-type zinc fingers span residues His-196 to His-218, Tyr-224 to His-248, and Tyr-254 to His-280. Positions Ser-321–Lys-343 are disordered.

It belongs to the GLI C2H2-type zinc-finger protein family.

The protein resides in the nucleus. In terms of biological role, transcription factor which represses a set of lipase genes involved in fat catabolism. The sequence is that of Zinc finger protein GLIS2 homolog (sug) from Drosophila melanogaster (Fruit fly).